Here is a 266-residue protein sequence, read N- to C-terminus: Type III pantothenate kinase (266 aa).

6–13 contributes to the ATP binding site; that stretch reads DIGNSRIK. Substrate-binding positions include Tyr-94 and 101–104; that span reads GIDR. The Proton acceptor role is filled by Asp-103. Asp-128 is a binding site for K(+). An ATP-binding site is contributed by Thr-131. A substrate-binding site is contributed by Thr-183.

It belongs to the type III pantothenate kinase family. Homodimer. NH4(+) is required as a cofactor. The cofactor is K(+).

The protein localises to the cytoplasm. The catalysed reaction is (R)-pantothenate + ATP = (R)-4'-phosphopantothenate + ADP + H(+). It functions in the pathway cofactor biosynthesis; coenzyme A biosynthesis; CoA from (R)-pantothenate: step 1/5. In terms of biological role, catalyzes the phosphorylation of pantothenate (Pan), the first step in CoA biosynthesis. The polypeptide is Type III pantothenate kinase (Nitrosococcus oceani (strain ATCC 19707 / BCRC 17464 / JCM 30415 / NCIMB 11848 / C-107)).